Reading from the N-terminus, the 280-residue chain is Pantothenate synthetase (280 aa).

An ATP-binding site is contributed by 31-38; the sequence is MGNLHVGH. The active-site Proton donor is the His-38. Residue Gln-62 participates in (R)-pantoate binding. Position 62 (Gln-62) interacts with beta-alanine. ATP is bound at residue 150 to 153; it reads GKKD. Gln-156 lines the (R)-pantoate pocket. Residues Val-179 and 187–190 each bind ATP; that span reads MSSR.

Belongs to the pantothenate synthetase family. Homodimer.

It localises to the cytoplasm. It catalyses the reaction (R)-pantoate + beta-alanine + ATP = (R)-pantothenate + AMP + diphosphate + H(+). It functions in the pathway cofactor biosynthesis; (R)-pantothenate biosynthesis; (R)-pantothenate from (R)-pantoate and beta-alanine: step 1/1. Functionally, catalyzes the condensation of pantoate with beta-alanine in an ATP-dependent reaction via a pantoyl-adenylate intermediate. This Xanthomonas oryzae pv. oryzae (strain KACC10331 / KXO85) protein is Pantothenate synthetase.